Here is a 279-residue protein sequence, read N- to C-terminus: 5'-nucleotidase SurE (279 aa).

A divalent metal cation is bound by residues aspartate 28, aspartate 29, serine 59, and asparagine 113.

The protein belongs to the SurE nucleotidase family. A divalent metal cation serves as cofactor.

Its subcellular location is the cytoplasm. It carries out the reaction a ribonucleoside 5'-phosphate + H2O = a ribonucleoside + phosphate. Functionally, nucleotidase that shows phosphatase activity on nucleoside 5'-monophosphates. The chain is 5'-nucleotidase SurE from Methanospirillum hungatei JF-1 (strain ATCC 27890 / DSM 864 / NBRC 100397 / JF-1).